The sequence spans 201 residues: uncharacterized protein (201 aa).

Residues 1 to 23 (MKILYFIFVIIINILLILNHVKS) form the signal peptide. Residues 24–178 (KYNTFIFENT…GNYGEDPQRN (155 aa)) are Extracellular-facing. Asn114 and Asn134 each carry an N-linked (GlcNAc...) asparagine glycan. The disordered stretch occupies residues 122-157 (TPETPSPTENAPNTSGGSSEGNHYTYKSSSSSSEHI). Over residues 123–148 (PETPSPTENAPNTSGGSSEGNHYTYK) the composition is skewed to polar residues. Residues 179–199 (IGISLSSSLIFISILFLIIFI) form a helical membrane-spanning segment. Over 200–201 (NN) the chain is Cytoplasmic.

It localises to the membrane. This is an uncharacterized protein from Dictyostelium discoideum (Social amoeba).